A 392-amino-acid chain; its full sequence is WD repeat-containing protein GTS1 (392 aa).

4 WD repeats span residues 81 to 124, 128 to 167, 171 to 211, and 323 to 368; these read GHSD…QVSR, GNDQ…QVAC, SHMD…NDDD, and GHID…TEIN.

In terms of tissue distribution, expressed in germinating seeds, rosettes leaves, flowers and siliques.

In terms of biological role, involved in the control of plant growth development. Acts as negative regulator of seed germination, cell division in meristematic regions, plant growth and overall biomass accumulation. May function by regulating ribosome activities and biogenesis in plant cells. This chain is WD repeat-containing protein GTS1, found in Arabidopsis thaliana (Mouse-ear cress).